The primary structure comprises 98 residues: Flagellar hook-basal body complex protein FliE (98 aa).

The interval K22–T56 is disordered. The segment covering T23–T56 has biased composition (polar residues).

It belongs to the FliE family.

Its subcellular location is the bacterial flagellum basal body. In Listeria innocua serovar 6a (strain ATCC BAA-680 / CLIP 11262), this protein is Flagellar hook-basal body complex protein FliE.